The primary structure comprises 1372 residues: DNA-directed RNA polymerase subunit beta' (1372 aa).

The Zn(2+) site is built by C69, C71, C84, and C87. Mg(2+) contacts are provided by D460, D462, and D464. Residues C808, C882, C889, and C892 each coordinate Zn(2+).

This sequence belongs to the RNA polymerase beta' chain family. In terms of assembly, the RNAP catalytic core consists of 2 alpha, 1 beta, 1 beta' and 1 omega subunit. When a sigma factor is associated with the core the holoenzyme is formed, which can initiate transcription. It depends on Mg(2+) as a cofactor. The cofactor is Zn(2+).

The catalysed reaction is RNA(n) + a ribonucleoside 5'-triphosphate = RNA(n+1) + diphosphate. In terms of biological role, DNA-dependent RNA polymerase catalyzes the transcription of DNA into RNA using the four ribonucleoside triphosphates as substrates. The polypeptide is DNA-directed RNA polymerase subunit beta' (Rickettsia typhi (strain ATCC VR-144 / Wilmington)).